The following is a 629-amino-acid chain: tRNA uridine 5-carboxymethylaminomethyl modification enzyme MnmG (629 aa).

FAD contacts are provided by residues 13-18 (GGGHAG), valine 125, and serine 180. Residue 273-287 (GPRYCPSIEDKVMRF) participates in NAD(+) binding. Glutamine 370 is a binding site for FAD.

The protein belongs to the MnmG family. As to quaternary structure, homodimer. Heterotetramer of two MnmE and two MnmG subunits. The cofactor is FAD.

The protein localises to the cytoplasm. NAD-binding protein involved in the addition of a carboxymethylaminomethyl (cmnm) group at the wobble position (U34) of certain tRNAs, forming tRNA-cmnm(5)s(2)U34. The polypeptide is tRNA uridine 5-carboxymethylaminomethyl modification enzyme MnmG (Salmonella choleraesuis (strain SC-B67)).